The following is a 519-amino-acid chain: Glutamate--cysteine ligase (519 aa).

Belongs to the glutamate--cysteine ligase type 1 family. Type 1 subfamily.

The enzyme catalyses L-cysteine + L-glutamate + ATP = gamma-L-glutamyl-L-cysteine + ADP + phosphate + H(+). The protein operates within sulfur metabolism; glutathione biosynthesis; glutathione from L-cysteine and L-glutamate: step 1/2. This chain is Glutamate--cysteine ligase, found in Photorhabdus laumondii subsp. laumondii (strain DSM 15139 / CIP 105565 / TT01) (Photorhabdus luminescens subsp. laumondii).